Here is a 958-residue protein sequence, read N- to C-terminus: Dermatan-sulfate epimerase (958 aa).

Positions 1–22 (MRTHTRGAPSVFFICLFCFVSA) are cleaved as a signal peptide. Over 23–902 (CVTDENPEVM…APALSASYTR (880 aa)) the chain is Lumenal. Asn183 carries N-linked (GlcNAc...) asparagine glycosylation. His205 (proton donor) is an active-site residue. The active site involves Tyr261. N-linked (GlcNAc...) asparagine glycosylation is found at Asn336 and Asn411. Positions 452 and 470 each coordinate Mn(2+). Tyr473 is a catalytic residue. Mn(2+) is bound at residue Asn481. 2 N-linked (GlcNAc...) asparagine glycosylation sites follow: Asn642 and Asn648. Residues 903 to 923 (LFLILNIAIFFVMLAMQLTYF) form a helical membrane-spanning segment. The Cytoplasmic portion of the chain corresponds to 924 to 933 (QRAQSLHGQR). A helical membrane pass occupies residues 934-954 (CLYAVLLIDSCILLWLYSSCS). Over 955-958 (QSQC) the chain is Lumenal.

This sequence belongs to the dermatan-sulfate isomerase family. Requires Mn(2+) as cofactor. Post-translationally, N-glycosylated. Glycosylation is important for enzymatic activity.

The protein resides in the endoplasmic reticulum membrane. It is found in the golgi apparatus membrane. It localises to the cytoplasmic vesicle membrane. Its subcellular location is the microsome membrane. It carries out the reaction chondroitin 4'-sulfate = dermatan 4'-sulfate. The protein operates within glycan metabolism; chondroitin sulfate biosynthesis. It functions in the pathway glycan metabolism; heparan sulfate biosynthesis. In terms of biological role, converts D-glucuronic acid to L-iduronic acid (IdoUA) residues. Plays an important role in the biosynthesis of the glycosaminoglycan/mucopolysaccharide dermatan sulfate. In Bos taurus (Bovine), this protein is Dermatan-sulfate epimerase (DSE).